The following is a 138-amino-acid chain: Putative pre-16S rRNA nuclease (138 aa).

The protein belongs to the YqgF nuclease family.

It localises to the cytoplasm. Its function is as follows. Could be a nuclease involved in processing of the 5'-end of pre-16S rRNA. This is Putative pre-16S rRNA nuclease from Bacteroides thetaiotaomicron (strain ATCC 29148 / DSM 2079 / JCM 5827 / CCUG 10774 / NCTC 10582 / VPI-5482 / E50).